The following is an 83-amino-acid chain: Small ribosomal subunit protein eS21 (83 aa).

This sequence belongs to the eukaryotic ribosomal protein eS21 family. As to quaternary structure, component of the 40S small ribosomal subunit. Interacts with sta.

The protein resides in the cytoplasm. It is found in the cytosol. It localises to the rough endoplasmic reticulum. May be an associated component of the ribosome rather than a core structural subunit. May act as a translation initiation factor. Has a role in regulation of cell proliferation in the hematopoietic organs and the imaginal disks of larva. This is Small ribosomal subunit protein eS21 (RpS21) from Drosophila erecta (Fruit fly).